Consider the following 145-residue polypeptide: 6-pyruvoyl tetrahydrobiopterin synthase (145 aa).

Position 19 is a phosphoserine; by PKG (Ser19). A Zn(2+)-binding site is contributed by His24. Residue Ser28 is modified to Phosphoserine. Cys43 serves as the catalytic Proton acceptor. The Zn(2+) site is built by His49 and His51. The active-site Charge relay system is the His90. Tyr128 carries the post-translational modification Phosphotyrosine. The active-site Charge relay system is the Glu134.

This sequence belongs to the PTPS family. As to quaternary structure, homohexamer formed of two homotrimers in a head to head fashion. The cofactor is Zn(2+). In terms of processing, phosphorylation of Ser-19 is required for maximal enzyme activity.

It carries out the reaction 7,8-dihydroneopterin 3'-triphosphate = 6-pyruvoyl-5,6,7,8-tetrahydropterin + triphosphate + H(+). It participates in cofactor biosynthesis; tetrahydrobiopterin biosynthesis; tetrahydrobiopterin from 7,8-dihydroneopterin triphosphate: step 1/3. Its function is as follows. Involved in the biosynthesis of tetrahydrobiopterin, an essential cofactor of aromatic amino acid hydroxylases. Catalyzes the transformation of 7,8-dihydroneopterin triphosphate into 6-pyruvoyl tetrahydropterin. The sequence is that of 6-pyruvoyl tetrahydrobiopterin synthase (PTS) from Homo sapiens (Human).